The chain runs to 307 residues: Porphobilinogen deaminase (307 aa).

C239 carries the S-(dipyrrolylmethanemethyl)cysteine modification.

Belongs to the HMBS family. In terms of assembly, monomer. Requires dipyrromethane as cofactor.

The catalysed reaction is 4 porphobilinogen + H2O = hydroxymethylbilane + 4 NH4(+). Its pathway is porphyrin-containing compound metabolism; protoporphyrin-IX biosynthesis; coproporphyrinogen-III from 5-aminolevulinate: step 2/4. Its function is as follows. Tetrapolymerization of the monopyrrole PBG into the hydroxymethylbilane pre-uroporphyrinogen in several discrete steps. The sequence is that of Porphobilinogen deaminase from Campylobacter jejuni subsp. doylei (strain ATCC BAA-1458 / RM4099 / 269.97).